Here is a 146-residue protein sequence, read N- to C-terminus: Large ribosomal subunit protein bL17 (146 aa).

The interval 118-146 is disordered; sequence RDPAAKGQDSGPKPEVASDEDEAGEAAAA. Residues 134–146 are compositionally biased toward acidic residues; that stretch reads ASDEDEAGEAAAA.

This sequence belongs to the bacterial ribosomal protein bL17 family. As to quaternary structure, part of the 50S ribosomal subunit. Contacts protein L32.

This Acidiphilium cryptum (strain JF-5) protein is Large ribosomal subunit protein bL17.